A 542-amino-acid polypeptide reads, in one-letter code: Protein lin-9 homolog (542 aa).

Ala-2 carries the N-acetylalanine modification. The sufficient for interaction with RB1 stretch occupies residues 2 to 296; it reads AELDQLPDES…QKQRPSRFFM (295 aa). Lys-21 participates in a covalent cross-link: Glycyl lysine isopeptide (Lys-Gly) (interchain with G-Cter in SUMO2). A phosphoserine mark is found at Ser-65 and Ser-95. Residues Thr-96 and Thr-304 each carry the phosphothreonine modification. A phosphoserine mark is found at Ser-309 and Ser-321. The stretch at 355–413 forms a coiled coil; it reads IKKEHIKKLREMNTDAEKLKSYSMPISIEFQRRYATIVLELEQLNKDLNKVLHKVQQYC.

The protein belongs to the lin-9 family. Component of the DREAM complex (also named LINC complex) at least composed of E2F4, E2F5, LIN9, LIN37, LIN52, LIN54, MYBL1, MYBL2, RBL1, RBL2, RBBP4, TFDP1 and TFDP2. The complex exists in quiescent cells where it represses cell cycle-dependent genes. It dissociates in S phase when LIN9, LIN37, LIN52 and LIN54 form a subcomplex that binds to MYBL2. Interacts with RB1.

Its subcellular location is the nucleus. The protein localises to the nucleoplasm. Acts as a tumor suppressor. Inhibits DNA synthesis. Its ability to inhibit oncogenic transformation is mediated through its association with RB1. Plays a role in the expression of genes required for the G1/S transition. The protein is Protein lin-9 homolog (LIN9) of Macaca fascicularis (Crab-eating macaque).